We begin with the raw amino-acid sequence, 357 residues long: Type II methyltransferase M1.HgaI (357 aa).

Residues 5 to 357 (IMGLSLFSSA…NITREIFNEN (353 aa)) form the SAM-dependent MTase C5-type domain. Residue cysteine 83 is part of the active site.

The protein belongs to the class I-like SAM-binding methyltransferase superfamily. C5-methyltransferase family.

It carries out the reaction a 2'-deoxycytidine in DNA + S-adenosyl-L-methionine = a 5-methyl-2'-deoxycytidine in DNA + S-adenosyl-L-homocysteine + H(+). Functionally, a methylase that recognizes DNA with the sequence 5'-GCGTC-3', methylates C-2, and protects the DNA from cleavage by the HgaI endonuclease. In Avibacterium volantium (Pasteurella volantium), this protein is Type II methyltransferase M1.HgaI (hgaIAM).